The primary structure comprises 877 residues: GPI ethanolamine phosphate transferase 2 (877 aa).

Residues Asn-190 and Asn-368 are each glycosylated (N-linked (GlcNAc...) asparagine). 5 helical membrane-spanning segments follow: residues 409-429 (VDIYIGLSILVAMAIVAFGLF), 443-463 (YNWYFIGISIVYSIHFHASSL), 464-484 (IEEEYQIWWFFSIICLFALYF), 528-548 (VDLLWVLNIATYFLTAILIYS), and 570-590 (DFGSLVTFIVTFVTCSISFSF). N-linked (GlcNAc...) asparagine glycosylation is present at Asn-611. 6 helical membrane-spanning segments follow: residues 634–654 (IHLSKILFYCIGVLIIVRIVL), 683–703 (EIVPIFLIFSLVKFSAAKLLA), 716–736 (LMIIITLFSLCMQNLSFFSMG), 758–778 (VFLVGVLTYCSNFAGPIFWSL), 817–837 (LAGFLFYSMAGLSLVASCFNL), and 854–876 (FASWTLLTNILIDTISSLSILAL).

It belongs to the PIGG/PIGN/PIGO family. PIGG subfamily.

The protein localises to the endoplasmic reticulum membrane. The protein operates within glycolipid biosynthesis; glycosylphosphatidylinositol-anchor biosynthesis. In terms of biological role, ethanolamine phosphate transferase involved in glycosylphosphatidylinositol-anchor biosynthesis. Transfers ethanolamine phosphate to the GPI second mannose. This Debaryomyces hansenii (strain ATCC 36239 / CBS 767 / BCRC 21394 / JCM 1990 / NBRC 0083 / IGC 2968) (Yeast) protein is GPI ethanolamine phosphate transferase 2 (LAS21).